We begin with the raw amino-acid sequence, 117 residues long: Putative phosphotransferase enzyme IIB component MPN_268 (117 aa).

A helical membrane pass occupies residues 1–21; that stretch reads MKVLLWIGYVLSFGLLYLYLV. One can recognise a PTS EIIB type-1 domain in the interval 42–117; it reads PFAVRDFIAA…QLKQQIENER (76 aa).

Its subcellular location is the membrane. The phosphoenolpyruvate-dependent sugar phosphotransferase system (PTS), a major carbohydrate active -transport system, catalyzes the phosphorylation of incoming sugar substrates concomitant with their translocation across the cell membrane. The chain is Putative phosphotransferase enzyme IIB component MPN_268 from Mycoplasma pneumoniae (strain ATCC 29342 / M129 / Subtype 1) (Mycoplasmoides pneumoniae).